Consider the following 439-residue polypeptide: MSVPSALMKQPPIQSTAGAVPVRNEKGEISMEKVKVKRYVSGKRPDYAPMESSDEEDEEFQFIKKAKEQEAEPEEQEEDSSSDPRLRRLQNRISEDVEERLARHRKIVEPEVVGESDSEVEGDAWRLEREDSSEEEEEEIDDEEIERRRGMMRQRAQERKNEEMEVMEVEDEGRSGEESESESEYEEYTDSEDEMEPRLKPVFIRKKDRVTVQEREAEALKQKELEQEAKRMAEERRKYTLKIVEEETKKELEENKRSLAALDALNTDDENDEEEYEAWKVRELKRIKREREDREALEKEKAEIERMRNLTEEERRAELRANGKVITNKAVKGKYKFLQKYYHRGAFFMDEDEEVYKRDFSAPTLEDHFNKTILPKVMQVKNFGRSGRTKYTHLVDQDTTSFDSAWGQESAQNTKFFKQKAAGVRDVFERPSAKKRKTT.

The segment at 1–200 (MSVPSALMKQ…SEDEMEPRLK (200 aa)) is disordered. An N-acetylserine modification is found at serine 2. The segment covering 23 to 34 (RNEKGEISMEKV) has biased composition (basic and acidic residues). A phosphoserine mark is found at serine 52 and serine 53. Positions 61 to 70 (QFIKKAKEQE) are enriched in basic and acidic residues. Residue lysine 67 forms a Glycyl lysine isopeptide (Lys-Gly) (interchain with G-Cter in SUMO2) linkage. Residues 71–81 (AEPEEQEEDSS) are compositionally biased toward acidic residues. A phosphoserine mark is found at serine 94, serine 116, serine 118, serine 132, and serine 133. Acidic residues-rich tracts occupy residues 112–122 (VVGESDSEVEG) and 131–144 (DSSE…DDEE). The segment covering 145–163 (IERRRGMMRQRAQERKNEE) has biased composition (basic and acidic residues). Positions 178–195 (ESESESEYEEYTDSEDEM) are enriched in acidic residues. Lysine 249 is covalently cross-linked (Glycyl lysine isopeptide (Lys-Gly) (interchain with G-Cter in SUMO2)). Threonine 267 is subject to Phosphothreonine. A Glycyl lysine isopeptide (Lys-Gly) (interchain with G-Cter in SUMO2) cross-link involves residue lysine 357. Serine 361 carries the phosphoserine modification. Glycyl lysine isopeptide (Lys-Gly) (interchain with G-Cter in SUMO2) cross-links involve residues lysine 371, lysine 381, lysine 415, and lysine 418. Serine 432 carries the phosphoserine modification.

Belongs to the MFAP1 family. Component of the spliceosome B complex. Interacts with PRPF38A (via N-terminal interaction domain).

The protein resides in the nucleus. Functionally, involved in pre-mRNA splicing as a component of the spliceosome. The chain is Microfibrillar-associated protein 1A from Mus musculus (Mouse).